The sequence spans 229 residues: Rab-like protein 2A (229 aa).

GTP-binding positions include 28–35 (GDSAVGKS), 76–80 (DTAGQ), and 133–136 (NKID). Residues 200-229 (NLEQEEEDVPDQEQSGSIETPSEEVASPHS) are disordered.

The protein belongs to the small GTPase superfamily. Rab family. In terms of assembly, interacts with IFT27, IFT81, IFT172, ATP6V1E1, HK1, LDHC, MAPRE1 and HSPA2.

Functionally, plays an essential role in male fertility, sperm intra-flagellar transport, and tail assembly. Binds, in a GTP-regulated manner, to a specific set of effector proteins including key proteins involved in cilia development and function and delivers them into the growing sperm tail. The polypeptide is Rab-like protein 2A (RABL2A) (Pongo abelii (Sumatran orangutan)).